A 342-amino-acid polypeptide reads, in one-letter code: Zinc transporter ZIP11 (342 aa).

7 helical membrane-spanning segments follow: residues Leu-12 to Phe-32, Leu-44 to Val-64, Gly-72 to Val-92, Ile-194 to Val-214, Phe-263 to Val-285, Ile-290 to Met-307, and Leu-322 to Gly-342.

The protein belongs to the ZIP transporter (TC 2.A.5) family. In terms of tissue distribution, highly expressed in the testes and portions of the digestive system including the stomach, ileum and cecum. In contrast, expressed at very low levels in liver, duodenum, jejunum, and colon.

The protein resides in the cell membrane. The protein localises to the nucleus. Its subcellular location is the cytoplasm. It is found in the golgi apparatus. The enzyme catalyses Zn(2+)(in) = Zn(2+)(out). It catalyses the reaction Cu(2+)(in) = Cu(2+)(out). Zinc importer that regulates cytosolic zinc concentration either via zinc influx from the extracellular compartment or efflux from intracellular organelles such as Golgi apparatus. May transport copper ions as well. The transport mechanism remains to be elucidated. The sequence is that of Zinc transporter ZIP11 (Slc39a11) from Mus musculus (Mouse).